Consider the following 511-residue polypeptide: Potassium voltage-gated channel subfamily A member 10 (511 aa).

Residues 22–50 (IQEEPGYATDFDSTSPKGRPGGSSFSNGK) are disordered. A helical membrane pass occupies residues 218-238 (VAVVSVLVVVISITIFCLETL). Asparagine 256 carries N-linked (GlcNAc...) asparagine glycosylation. Residues 271–292 (FFMVESTCIVWFTFELVLRFVV) traverse the membrane as a helical segment. Residue cysteine 293 is the site of S-palmitoyl cysteine attachment. Residues 303 to 323 (IMNIIDIISIIPYFATLITEL) traverse the membrane as a helical segment. N-linked (GlcNAc...) asparagine glycosylation occurs at asparagine 334. The helical; Voltage-sensor transmembrane segment at 339-358 (ILRIIRLVRVFRIFKLSRHS) threads the bilayer. The chain crosses the membrane as a helical span at residues 375-395 (LGLLIFFLFIGVILFSSAVYF). Residues 421–426 (TVGYGD) carry the Selectivity filter motif. A helical membrane pass occupies residues 436 to 456 (IVGTLCAIAGVLTIALPVPVI). The disordered stretch occupies residues 489–511 (SRMGSTDSLNKTNGGCSTEKSRK). N-linked (GlcNAc...) asparagine glycosylation occurs at asparagine 498.

It belongs to the potassium channel family. A (Shaker) (TC 1.A.1.2) subfamily. Kv1.8/KCNA10 sub-subfamily. Homotetramer. Interacts with KCN4B/POMP. Interaction with KCN4B/POMP is necessary for the modulation of channel activity by cAMP. As to expression, detected in kidney, in proximal tubules, glomerular endothelium, in vascular endothelium and in smooth muscle cells.

Its subcellular location is the membrane. The enzyme catalyses K(+)(in) = K(+)(out). The channel activity is up-regulated by cAMP. Its function is as follows. Voltage-gated potassium ion channel that mediates K(+) permeability of excitable membranes. When opened in response to the voltage difference across the membrane, KCNA10 channel selectively allows the flow of potassium ions across the membrane down their electrochemical gradient. The polypeptide is Potassium voltage-gated channel subfamily A member 10 (Homo sapiens (Human)).